The primary structure comprises 436 residues: 4-hydroxyphenylpyruvate dioxygenase (436 aa).

2 consecutive VOC domains span residues 38 to 194 (RFHH…GFEV) and 210 to 370 (RLDH…IFTK). Residues His213, His295, and Glu381 each coordinate Fe cation.

The protein belongs to the 4HPPD family. The cofactor is Fe cation.

It localises to the cytoplasm. The enzyme catalyses 3-(4-hydroxyphenyl)pyruvate + O2 = homogentisate + CO2. It participates in amino-acid degradation; L-phenylalanine degradation; acetoacetate and fumarate from L-phenylalanine: step 3/6. The protein operates within cofactor biosynthesis; prenylquinone biosynthesis. In Plectranthus scutellarioides (Coleus), this protein is 4-hydroxyphenylpyruvate dioxygenase.